A 71-amino-acid chain; its full sequence is Conotoxin Vc6.12 (71 aa).

The N-terminal stretch at 1–19 is a signal peptide; the sequence is MQKLIILLLVAAVLMSTQA. The propeptide occupies 20–43; the sequence is LFQEKRPMKKINFLSKGKTDAEKQ. 3 cysteine pairs are disulfide-bonded: cysteine 48-cysteine 62, cysteine 55-cysteine 66, and cysteine 61-cysteine 70.

This sequence belongs to the conotoxin O2 superfamily. In terms of tissue distribution, expressed by the venom duct.

It is found in the secreted. Functionally, inhibits voltage-gated ion channels. This chain is Conotoxin Vc6.12, found in Conus victoriae (Queen Victoria cone).